Here is a 335-residue protein sequence, read N- to C-terminus: Mycobacterial beta-ketoacyl-[acyl-carrier-protein] synthase III (335 aa).

Residues Cys-122 and His-258 contribute to the active site. The ACP-binding stretch occupies residues 259-263; that stretch reads QANSR. Asn-289 is an active-site residue.

This sequence belongs to the thiolase-like superfamily. FabH family. Homodimer.

It is found in the cytoplasm. It carries out the reaction malonyl-[ACP] + dodecanoyl-CoA + H(+) = 3-oxotetradecanoyl-[ACP] + CO2 + CoA. It participates in lipid metabolism; fatty acid biosynthesis. Its pathway is lipid metabolism; mycolic acid biosynthesis. Its function is as follows. Catalyzes the condensation reaction of fatty acid synthesis by the addition to an acyl acceptor of two carbons from malonyl-ACP. Catalyzes the first condensation reaction which initiates fatty acid synthesis and may therefore play a role in governing the total rate of fatty acid production. Possesses both acetoacetyl-ACP synthase and acetyl transacylase activities. Its substrate specificity determines the biosynthesis of branched-chain and/or straight-chain of fatty acids. The polypeptide is Mycobacterial beta-ketoacyl-[acyl-carrier-protein] synthase III (Mycobacterium avium (strain 104)).